Here is a 147-residue protein sequence, read N- to C-terminus: Large ribosomal subunit protein bL9 (147 aa).

This sequence belongs to the bacterial ribosomal protein bL9 family.

Binds to the 23S rRNA. This is Large ribosomal subunit protein bL9 from Bacteroides thetaiotaomicron (strain ATCC 29148 / DSM 2079 / JCM 5827 / CCUG 10774 / NCTC 10582 / VPI-5482 / E50).